The following is a 576-amino-acid chain: Proline--tRNA ligase (576 aa).

This sequence belongs to the class-II aminoacyl-tRNA synthetase family. ProS type 1 subfamily. As to quaternary structure, homodimer.

The protein localises to the cytoplasm. The enzyme catalyses tRNA(Pro) + L-proline + ATP = L-prolyl-tRNA(Pro) + AMP + diphosphate. In terms of biological role, catalyzes the attachment of proline to tRNA(Pro) in a two-step reaction: proline is first activated by ATP to form Pro-AMP and then transferred to the acceptor end of tRNA(Pro). As ProRS can inadvertently accommodate and process non-cognate amino acids such as alanine and cysteine, to avoid such errors it has two additional distinct editing activities against alanine. One activity is designated as 'pretransfer' editing and involves the tRNA(Pro)-independent hydrolysis of activated Ala-AMP. The other activity is designated 'posttransfer' editing and involves deacylation of mischarged Ala-tRNA(Pro). The misacylated Cys-tRNA(Pro) is not edited by ProRS. The chain is Proline--tRNA ligase from Leptospira interrogans serogroup Icterohaemorrhagiae serovar Lai (strain 56601).